The chain runs to 644 residues: Probable lysophospholipase 2 (644 aa).

The signal sequence occupies residues 1 to 19 (MYFQSFYFLALLLATAVYG). 18 N-linked (GlcNAc...) asparagine glycosylation sites follow: N44, N96, N141, N178, N221, N245, N253, N281, N286, N316, N319, N373, N393, N449, N501, N558, N579, and N596. The region spanning 53–600 (SCDSSEIMVN…SQYCWNGTVD (548 aa)) is the PLA2c domain.

Belongs to the lysophospholipase family.

It localises to the secreted. The catalysed reaction is a 1-acyl-sn-glycero-3-phosphocholine + H2O = sn-glycerol 3-phosphocholine + a fatty acid + H(+). Catalyzes the release of fatty acids from lysophospholipids. This is Probable lysophospholipase 2 (plb2) from Schizosaccharomyces pombe (strain 972 / ATCC 24843) (Fission yeast).